We begin with the raw amino-acid sequence, 143 residues long: Large ribosomal subunit protein uL13 (143 aa).

The protein belongs to the universal ribosomal protein uL13 family. As to quaternary structure, part of the 50S ribosomal subunit.

This protein is one of the early assembly proteins of the 50S ribosomal subunit, although it is not seen to bind rRNA by itself. It is important during the early stages of 50S assembly. The chain is Large ribosomal subunit protein uL13 from Rubrobacter xylanophilus (strain DSM 9941 / JCM 11954 / NBRC 16129 / PRD-1).